The primary structure comprises 278 residues: Small ribosomal subunit biogenesis GTPase RsgA (278 aa).

Residues K62–I218 form the CP-type G domain. Residues T112–D115 and G162–S170 contribute to the GTP site. Residues C241, C246, H248, and C254 each coordinate Zn(2+).

It belongs to the TRAFAC class YlqF/YawG GTPase family. RsgA subfamily. Monomer. Associates with 30S ribosomal subunit, binds 16S rRNA. Requires Zn(2+) as cofactor.

The protein localises to the cytoplasm. In terms of biological role, one of several proteins that assist in the late maturation steps of the functional core of the 30S ribosomal subunit. Helps release RbfA from mature subunits. May play a role in the assembly of ribosomal proteins into the subunit. Circularly permuted GTPase that catalyzes slow GTP hydrolysis, GTPase activity is stimulated by the 30S ribosomal subunit. The protein is Small ribosomal subunit biogenesis GTPase RsgA of Mycoplasma genitalium (strain ATCC 33530 / DSM 19775 / NCTC 10195 / G37) (Mycoplasmoides genitalium).